The primary structure comprises 235 residues: Protein GrpE (235 aa).

Basic and acidic residues-rich tracts occupy residues 1–16 and 24–35; these read MENK…HEKN and NNVKKENLHEDQ. The tract at residues 1 to 51 is disordered; sequence MENKNQKHNNEFHEKNQQSQKDNNNVKKENLHEDQSDLNDANFDDGGKKNK.

It belongs to the GrpE family. In terms of assembly, homodimer.

Its subcellular location is the cytoplasm. Participates actively in the response to hyperosmotic and heat shock by preventing the aggregation of stress-denatured proteins, in association with DnaK and GrpE. It is the nucleotide exchange factor for DnaK and may function as a thermosensor. Unfolded proteins bind initially to DnaJ; upon interaction with the DnaJ-bound protein, DnaK hydrolyzes its bound ATP, resulting in the formation of a stable complex. GrpE releases ADP from DnaK; ATP binding to DnaK triggers the release of the substrate protein, thus completing the reaction cycle. Several rounds of ATP-dependent interactions between DnaJ, DnaK and GrpE are required for fully efficient folding. This chain is Protein GrpE, found in Malacoplasma penetrans (strain HF-2) (Mycoplasma penetrans).